Here is a 228-residue protein sequence, read N- to C-terminus: Serum amyloid P-component (228 aa).

A signal peptide spans 1-20; that stretch reads MDKLLLWMSVFTSLLSEAFA. The Pentraxin (PTX) domain occupies 25-224; sequence NQKVFVFPRE…YVVIKPRMWD (200 aa). N-linked (GlcNAc...) asparagine glycosylation is present at asparagine 52. A disulfide bond links cysteine 56 and cysteine 115. Positions 78, 79, 156, 157, 158, and 168 each coordinate Ca(2+).

This sequence belongs to the pentraxin family. Homopentamer. Pentraxin (or pentaxin) have a discoid arrangement of 5 non-covalently bound subunits. It depends on Ca(2+) as a cofactor.

The protein localises to the secreted. The sequence is that of Serum amyloid P-component (Apcs) from Rattus norvegicus (Rat).